The chain runs to 977 residues: Bifunctional glutamine synthetase adenylyltransferase/adenylyl-removing enzyme (977 aa).

The adenylyl removase stretch occupies residues 1–457 (MRLPLPSDLP…HFRQVIADPD (457 aa)). An adenylyl transferase region spans residues 468–977 (GGEWSPLWEQ…RRIWGELGLS (510 aa)).

Belongs to the GlnE family. Requires Mg(2+) as cofactor.

The enzyme catalyses [glutamine synthetase]-O(4)-(5'-adenylyl)-L-tyrosine + phosphate = [glutamine synthetase]-L-tyrosine + ADP. The catalysed reaction is [glutamine synthetase]-L-tyrosine + ATP = [glutamine synthetase]-O(4)-(5'-adenylyl)-L-tyrosine + diphosphate. Its function is as follows. Involved in the regulation of glutamine synthetase GlnA, a key enzyme in the process to assimilate ammonia. When cellular nitrogen levels are high, the C-terminal adenylyl transferase (AT) inactivates GlnA by covalent transfer of an adenylyl group from ATP to specific tyrosine residue of GlnA, thus reducing its activity. Conversely, when nitrogen levels are low, the N-terminal adenylyl removase (AR) activates GlnA by removing the adenylyl group by phosphorolysis, increasing its activity. The regulatory region of GlnE binds the signal transduction protein PII (GlnB) which indicates the nitrogen status of the cell. This is Bifunctional glutamine synthetase adenylyltransferase/adenylyl-removing enzyme from Pseudomonas putida (strain ATCC 47054 / DSM 6125 / CFBP 8728 / NCIMB 11950 / KT2440).